The primary structure comprises 232 residues: Glycerol-3-phosphate acyltransferase (232 aa).

Helical transmembrane passes span 4–24, 56–76, 90–110, 124–144, 152–172, and 191–211; these read FLAIIVVAYLIGSIPTSIIAG, VVTLIDIAKGTIAAVPVVGFF, IALSLIAGMAAVIGHVFTVFA, MLIGIAPVSMLMVIGIFLLAV, VGSILAAIAFPLIIAIRKYVF, and SLDYHLLIFGGIVAVAIIYTH.

The protein belongs to the PlsY family. In terms of assembly, probably interacts with PlsX.

The protein resides in the cell inner membrane. It catalyses the reaction an acyl phosphate + sn-glycerol 3-phosphate = a 1-acyl-sn-glycero-3-phosphate + phosphate. Its pathway is lipid metabolism; phospholipid metabolism. In terms of biological role, catalyzes the transfer of an acyl group from acyl-phosphate (acyl-PO(4)) to glycerol-3-phosphate (G3P) to form lysophosphatidic acid (LPA). This enzyme utilizes acyl-phosphate as fatty acyl donor, but not acyl-CoA or acyl-ACP. In Chlorobaculum tepidum (strain ATCC 49652 / DSM 12025 / NBRC 103806 / TLS) (Chlorobium tepidum), this protein is Glycerol-3-phosphate acyltransferase.